The chain runs to 238 residues: Ephrin-A3 (238 aa).

The first 22 residues, 1–22 (MAAAPLLLLLLLVPVPLLPLLA), serve as a signal peptide directing secretion. One can recognise an Ephrin RBD domain in the interval 30 to 169 (GNRHAVYWNS…RMKVFVCCAS (140 aa)). Residues asparagine 38, asparagine 67, and asparagine 100 are each glycosylated (N-linked (GlcNAc...) asparagine). Cystine bridges form between cysteine 63/cysteine 110 and cysteine 99/cysteine 158. Glycine 214 carries GPI-anchor amidated glycine lipidation. Positions 215–238 (TSPKREHLPLAVGIAFFLMTFLAS) are cleaved as a propeptide — removed in mature form.

Belongs to the ephrin family. In terms of assembly, interacts with EPHA8; activates EPHA8. As to expression, expressed in brain, skeletal muscle, spleen, thymus, prostate, testis, ovary, small intestine, and peripheral blood leukocytes.

It localises to the cell membrane. Its function is as follows. Cell surface GPI-bound ligand for Eph receptors, a family of receptor tyrosine kinases which are crucial for migration, repulsion and adhesion during neuronal, vascular and epithelial development. Binds promiscuously Eph receptors residing on adjacent cells, leading to contact-dependent bidirectional signaling into neighboring cells. The signaling pathway downstream of the receptor is referred to as forward signaling while the signaling pathway downstream of the ephrin ligand is referred to as reverse signaling. This Homo sapiens (Human) protein is Ephrin-A3 (EFNA3).